The following is a 404-amino-acid chain: XK-related protein 8 (404 aa).

The next 8 helical transmembrane spans lie at 14 to 34 (FVFS…DVWV), 44 to 64 (FFWF…VQMF), 167 to 187 (AVQF…VVDY), 206 to 226 (SLIY…ALAL), 227 to 247 (FASV…LVFV), 263 to 283 (GEWL…FNVA), 292 to 312 (AIYH…WWCC), and 319 to 339 (EPYA…GLLF).

The protein belongs to the XK family.

It localises to the cell membrane. It catalyses the reaction a 1,2-diacyl-sn-glycero-3-phospho-L-serine(in) = a 1,2-diacyl-sn-glycero-3-phospho-L-serine(out). Phospholipid scramblase that promotes phosphatidylserine exposure on apoptotic cell surface, possibly by mediating phospholipid scrambling. Phosphatidylserine is a specific marker only present at the surface of apoptotic cells and acts as a specific signal for engulfment. The sequence is that of XK-related protein 8 from Tetraodon nigroviridis (Spotted green pufferfish).